The primary structure comprises 763 residues: Phosphoglycerol transferase I (763 aa).

Helical transmembrane passes span 1–21, 26–46, 77–97, and 108–128; these read MSEL…AWKA, WWFA…ITLF, ILPG…LGWI, and FGYS…SPAF.

Belongs to the OpgB family.

It is found in the cell inner membrane. It carries out the reaction a phosphatidylglycerol + a membrane-derived-oligosaccharide D-glucose = a 1,2-diacyl-sn-glycerol + a membrane-derived-oligosaccharide 6-(glycerophospho)-D-glucose.. It participates in glycan metabolism; osmoregulated periplasmic glucan (OPG) biosynthesis. Functionally, transfers a phosphoglycerol residue from phosphatidylglycerol to the membrane-bound nascent glucan backbones. The sequence is that of Phosphoglycerol transferase I from Escherichia coli O6:K15:H31 (strain 536 / UPEC).